The chain runs to 333 residues: Adenosine deaminase (333 aa).

Zn(2+)-binding residues include histidine 12 and histidine 14. Positions 14, 16, and 170 each coordinate substrate. Histidine 197 lines the Zn(2+) pocket. Glutamate 200 (proton donor) is an active-site residue. Residue aspartate 278 coordinates Zn(2+). A substrate-binding site is contributed by aspartate 279.

The protein belongs to the metallo-dependent hydrolases superfamily. Adenosine and AMP deaminases family. Adenosine deaminase subfamily. Zn(2+) serves as cofactor.

It carries out the reaction adenosine + H2O + H(+) = inosine + NH4(+). The catalysed reaction is 2'-deoxyadenosine + H2O + H(+) = 2'-deoxyinosine + NH4(+). Catalyzes the hydrolytic deamination of adenosine and 2-deoxyadenosine. This is Adenosine deaminase from Salmonella enteritidis PT4 (strain P125109).